The following is a 402-amino-acid chain: Acetate kinase (402 aa).

N7 contributes to the Mg(2+) binding site. K14 lines the ATP pocket. Position 95 (R95) interacts with substrate. D152 functions as the Proton donor/acceptor in the catalytic mechanism. Residues 212–216, 286–288, and 334–338 each bind ATP; these read HLGNG, DMR, and GIGEN. Mg(2+) is bound at residue E388.

The protein belongs to the acetokinase family. Homodimer. Requires Mg(2+) as cofactor. It depends on Mn(2+) as a cofactor.

It is found in the cytoplasm. The catalysed reaction is acetate + ATP = acetyl phosphate + ADP. The protein operates within metabolic intermediate biosynthesis; acetyl-CoA biosynthesis; acetyl-CoA from acetate: step 1/2. In terms of biological role, catalyzes the formation of acetyl phosphate from acetate and ATP. Can also catalyze the reverse reaction. The polypeptide is Acetate kinase (Nitratidesulfovibrio vulgaris (strain ATCC 29579 / DSM 644 / CCUG 34227 / NCIMB 8303 / VKM B-1760 / Hildenborough) (Desulfovibrio vulgaris)).